The following is a 130-amino-acid chain: Small ribosomal subunit protein uS9 (130 aa).

Belongs to the universal ribosomal protein uS9 family.

The protein is Small ribosomal subunit protein uS9 of Buchnera aphidicola subsp. Baizongia pistaciae (strain Bp).